The chain runs to 701 residues: Elongation factor G (701 aa).

Positions 8–291 (GRYRNIGIVA…AVIDYLPAPT (284 aa)) constitute a tr-type G domain. GTP-binding positions include 17 to 24 (AHVDAGKT), 89 to 93 (DTPGH), and 143 to 146 (NKMD).

It belongs to the TRAFAC class translation factor GTPase superfamily. Classic translation factor GTPase family. EF-G/EF-2 subfamily.

Its subcellular location is the cytoplasm. Its function is as follows. Catalyzes the GTP-dependent ribosomal translocation step during translation elongation. During this step, the ribosome changes from the pre-translocational (PRE) to the post-translocational (POST) state as the newly formed A-site-bound peptidyl-tRNA and P-site-bound deacylated tRNA move to the P and E sites, respectively. Catalyzes the coordinated movement of the two tRNA molecules, the mRNA and conformational changes in the ribosome. The chain is Elongation factor G from Pseudomonas savastanoi pv. phaseolicola (strain 1448A / Race 6) (Pseudomonas syringae pv. phaseolicola (strain 1448A / Race 6)).